The following is a 216-amino-acid chain: uncharacterized protein (216 aa).

Residues 125–176 form the Cupin type-2 domain; the sequence is YPKSTNFDSHYHDCDEYWVIIEGAGTVVVGSRSFEVEVGDCVAIGMGHHHDL.

This is an uncharacterized protein from Sinorhizobium fredii (strain NBRC 101917 / NGR234).